The primary structure comprises 390 residues: Bibenzyl synthase (390 aa).

Residue cysteine 164 is part of the active site.

The protein belongs to the thiolase-like superfamily. Chalcone/stilbene synthases family.

The enzyme catalyses 3-(3-hydroxyphenyl)-propanoyl-CoA + 3 malonyl-CoA + 3 H(+) = 3,3',5-trihydroxybibenzyl + 4 CO2 + 4 CoA. This is Bibenzyl synthase (BIBSY212) from Phalaenopsis sp. (Moth orchid).